We begin with the raw amino-acid sequence, 724 residues long: 1,4-alpha-glucan branching enzyme GlgB 1 (724 aa).

The Nucleophile role is filled by aspartate 403. Glutamate 456 (proton donor) is an active-site residue.

The protein belongs to the glycosyl hydrolase 13 family. GlgB subfamily. Monomer.

It carries out the reaction Transfers a segment of a (1-&gt;4)-alpha-D-glucan chain to a primary hydroxy group in a similar glucan chain.. Its pathway is glycan biosynthesis; glycogen biosynthesis. Functionally, catalyzes the formation of the alpha-1,6-glucosidic linkages in glycogen by scission of a 1,4-alpha-linked oligosaccharide from growing alpha-1,4-glucan chains and the subsequent attachment of the oligosaccharide to the alpha-1,6 position. The sequence is that of 1,4-alpha-glucan branching enzyme GlgB 1 from Xanthomonas campestris pv. campestris (strain 8004).